Consider the following 310-residue polypeptide: Ribose-phosphate pyrophosphokinase (310 aa).

ATP contacts are provided by residues 34-36 and 93-94; these read DQE and RQ. Mg(2+)-binding residues include H127 and D167. K190 is a catalytic residue. Residues R192, D216, and 220 to 224 contribute to the D-ribose 5-phosphate site; that span reads DSGGT.

The protein belongs to the ribose-phosphate pyrophosphokinase family. Class I subfamily. Homohexamer. Mg(2+) serves as cofactor.

The protein localises to the cytoplasm. It carries out the reaction D-ribose 5-phosphate + ATP = 5-phospho-alpha-D-ribose 1-diphosphate + AMP + H(+). It functions in the pathway metabolic intermediate biosynthesis; 5-phospho-alpha-D-ribose 1-diphosphate biosynthesis; 5-phospho-alpha-D-ribose 1-diphosphate from D-ribose 5-phosphate (route I): step 1/1. Functionally, involved in the biosynthesis of the central metabolite phospho-alpha-D-ribosyl-1-pyrophosphate (PRPP) via the transfer of pyrophosphoryl group from ATP to 1-hydroxyl of ribose-5-phosphate (Rib-5-P). In Agrobacterium fabrum (strain C58 / ATCC 33970) (Agrobacterium tumefaciens (strain C58)), this protein is Ribose-phosphate pyrophosphokinase.